A 407-amino-acid chain; its full sequence is Protein FAM53B (407 aa).

Disordered stretches follow at residues 204 to 286 (SSSM…RPSL) and 306 to 380 (ITGE…DTEP). 2 stretches are compositionally biased toward basic and acidic residues: residues 264 to 281 (LNEKKIGVKRRRPDDTHK) and 327 to 339 (DAVDSPAHEHNLK). The Nuclear localization signal motif lies at 272 to 275 (KRRR). A compositionally biased stretch (acidic residues) spans 357–369 (ITEEVDWNCDDGT).

Belongs to the FAM53 family. As to quaternary structure, interacts with ctnnb1. Predominantly expressed in proliferating cells throughout embryonic development.

The protein localises to the nucleus. Its function is as follows. Acts as a regulator of Wnt signaling pathway by regulating beta-catenin (ctnnb1) nuclear localization. The polypeptide is Protein FAM53B (Oryzias latipes (Japanese rice fish)).